The sequence spans 777 residues: Penicillin-binding protein 1B (777 aa).

At 1-30 (MTRKSSNRSRGRKARSGKSASSSKLQIWLG) the chain is on the cytoplasmic side. The chain crosses the membrane as a helical; Signal-anchor for type II membrane protein span at residues 31–52 (RIWSIGWKLALTLAAVLVFIGI). Topologically, residues 53–777 (YLDSMIKQRF…TEWIKKLFEW (725 aa)) are periplasmic. Residues 162 to 334 (LRLEPKLMGM…SYYNPMRYAE (173 aa)) are transglycosylase. The Proton donor; for transglycosylase activity role is filled by glutamate 200. The segment at 415 to 709 (SKLEQAIHDQ…ASGALRVYAQ (295 aa)) is transpeptidase. Residue serine 476 is the Acyl-ester intermediate; for transpeptidase activity of the active site.

In the N-terminal section; belongs to the glycosyltransferase 51 family. It in the C-terminal section; belongs to the transpeptidase family.

Its subcellular location is the cell inner membrane. It carries out the reaction [GlcNAc-(1-&gt;4)-Mur2Ac(oyl-L-Ala-gamma-D-Glu-L-Lys-D-Ala-D-Ala)](n)-di-trans,octa-cis-undecaprenyl diphosphate + beta-D-GlcNAc-(1-&gt;4)-Mur2Ac(oyl-L-Ala-gamma-D-Glu-L-Lys-D-Ala-D-Ala)-di-trans,octa-cis-undecaprenyl diphosphate = [GlcNAc-(1-&gt;4)-Mur2Ac(oyl-L-Ala-gamma-D-Glu-L-Lys-D-Ala-D-Ala)](n+1)-di-trans,octa-cis-undecaprenyl diphosphate + di-trans,octa-cis-undecaprenyl diphosphate + H(+). The enzyme catalyses Preferential cleavage: (Ac)2-L-Lys-D-Ala-|-D-Ala. Also transpeptidation of peptidyl-alanyl moieties that are N-acyl substituents of D-alanine.. Its pathway is cell wall biogenesis; peptidoglycan biosynthesis. Functionally, cell wall formation. Synthesis of cross-linked peptidoglycan from the lipid intermediates. The enzyme has a penicillin-insensitive transglycosylase N-terminal domain (formation of linear glycan strands) and a penicillin-sensitive transpeptidase C-terminal domain (cross-linking of the peptide subunits). The chain is Penicillin-binding protein 1B (mrcB) from Vibrio cholerae serotype O1 (strain ATCC 39315 / El Tor Inaba N16961).